We begin with the raw amino-acid sequence, 674 residues long: Glutaminase kidney isoform, mitochondrial (674 aa).

A mitochondrion-targeting transit peptide spans Met-1 to Leu-54. The tract at residues Pro-56–Ser-123 is disordered. Over residues Trp-58 to Gly-71 the composition is skewed to gly residues. Low complexity predominate over residues Pro-89–Gly-101. 2 positions are modified to N6-succinyllysine: Lys-135 and Lys-169. Ser-291 is a binding site for substrate. Lys-316 is subject to N6-acetyllysine. A highly mobile activation loop region spans residues Gly-320–Phe-327. Asn-340, Glu-386, Asn-393, Tyr-419, Tyr-471, and Val-489 together coordinate substrate. ANK repeat units lie at residues Asp-590–Phe-619 and Trp-624–Pro-653. Residues Thr-652–Leu-674 are disordered. Ser-657 is modified (phosphoserine).

This sequence belongs to the glutaminase family. As to quaternary structure, homotetramer, dimer of dimers. The tetramers can assemble into rod-like oligomers (in vitro), but the physiological significance of this is not clear. Interacts with RAF1 and MAP2K2. Interacts with ATCAY; the interaction is direct and may control GLS localization, negatively regulating its activity. In terms of processing, synthesized as a 74-kDa cytosolic precursor which is proteolytically processed by the mitochondrial-processing peptidase (MPP) via a 72-kDa intermediate to yield the mature mitochondrial 68- and 65-kDa subunits.

The protein resides in the mitochondrion. Its subcellular location is the cytoplasm. It localises to the cytosol. The protein localises to the mitochondrion matrix. The enzyme catalyses L-glutamine + H2O = L-glutamate + NH4(+). With respect to regulation, isoform 1 and isoform 2 are activated by phosphate, due to increased affinity for glutamine. At phosphate concentrations above 10 mM, isoform 2 is more efficient than isoform 1. Functionally, catalyzes the first reaction in the primary pathway for the renal catabolism of glutamine. Plays a role in maintaining acid-base homeostasis. Regulates the levels of the neurotransmitter glutamate, the main excitatory neurotransmitter in the brain. In Mus musculus (Mouse), this protein is Glutaminase kidney isoform, mitochondrial (Gls).